A 179-amino-acid chain; its full sequence is MIRNILKMGDERLLRIAPPVPAEMFGSSELETLIADMFETMHSVGGVGLAAPQIGIDLQLVIFGFERSERYPQAEAVPQTILLNPLITPLHPGVEEGWEGCLSVPGLRGMVDRYQSIRYEGFDPDGQPIERIAHGFHARVVQHECDHLIGRLYPSRITDFSKFGFMDVMFPDMDPNADE.

The Fe cation site is built by Cys-101 and His-143. Glu-144 is a catalytic residue. His-147 lines the Fe cation pocket.

It belongs to the polypeptide deformylase family. It depends on Fe(2+) as a cofactor.

The enzyme catalyses N-terminal N-formyl-L-methionyl-[peptide] + H2O = N-terminal L-methionyl-[peptide] + formate. In terms of biological role, removes the formyl group from the N-terminal Met of newly synthesized proteins. Requires at least a dipeptide for an efficient rate of reaction. N-terminal L-methionine is a prerequisite for activity but the enzyme has broad specificity at other positions. The sequence is that of Peptide deformylase 2 from Pseudomonas syringae pv. tomato (strain ATCC BAA-871 / DC3000).